Here is a 298-residue protein sequence, read N- to C-terminus: Ankyrin repeat domain-containing protein 29 (298 aa).

ANK repeat units lie at residues 8-38 (PLAN…DVDC), 42-71 (YGTT…DINL), 75-104 (TGST…STEF), 108-137 (DGGT…NVHD), 141-170 (DGAT…KVNQ), 174-203 (DGTA…DRDA), 207-236 (DGST…SLGI), and 239-268 (NGST…DPAL).

This Danio rerio (Zebrafish) protein is Ankyrin repeat domain-containing protein 29 (ankrd29).